The following is a 391-amino-acid chain: Inner membrane protein YdcO (391 aa).

Residues 1 to 9 are Cytoplasmic-facing; sequence MRLFSIPPP. Residues 10-30 traverse the membrane as a helical segment; that stretch reads TLLAGFLAVLIGYASSAAIIW. The Periplasmic segment spans residues 31–42; sequence QAAIVAGATTAQ. The helical transmembrane segment at 43–63 threads the bilayer; the sequence is ISGWMTALGLAMGVSTLTLTL. Residues 64-93 lie on the Cytoplasmic side of the membrane; it reads WYRVPVLTAWSTPGAALLVTGLQGLTLNEA. Residues 94-114 traverse the membrane as a helical segment; sequence IGVFIVTNALIVLCGITGLFA. Over 115–123 the chain is Periplasmic; sequence RLMRIIPHS. Residues 124–144 form a helical membrane-spanning segment; sequence LAAAMLAGILLRFGLQAFASL. Residues 145–167 are Cytoplasmic-facing; that stretch reads DGQFTLCGSMLLVWLATKAVAPR. Residues 168 to 188 traverse the membrane as a helical segment; sequence YAVIAAMIIGIVIVIAQGDVV. Topologically, residues 189–200 are periplasmic; that stretch reads TTDVVFKPVLPT. Residues 201-221 traverse the membrane as a helical segment; sequence YITPDFSFAHSLSVALPLFLV. Over 222–246 the chain is Cytoplasmic; it reads TMASQNAPGIAAMKAAGYSAPVSPL. The chain crosses the membrane as a helical span at residues 247–267; sequence IVFTGLLALVFSPFGVYSVGI. Over 268–287 the chain is Periplasmic; the sequence is AAITAAICQSPEAHPDKDQR. A helical membrane pass occupies residues 288-308; sequence WLAAAVAGIFYLLAGLFGSAI. At 309 to 311 the chain is on the cytoplasmic side; it reads TGM. A helical membrane pass occupies residues 312–332; that stretch reads MAALPVSWIQMLAGLALLSTI. The Periplasmic segment spans residues 333 to 361; sequence GGSLYQALHNERERDAAVVAFLVTASGLT. The helical transmembrane segment at 362–382 threads the bilayer; it reads LVGIGSAFWGLIAGGVCYVVL. Over 383–391 the chain is Cytoplasmic; it reads NLIADRNRY.

It is found in the cell inner membrane. In Escherichia coli (strain K12), this protein is Inner membrane protein YdcO (ydcO).